Reading from the N-terminus, the 197-residue chain is Ribosomal RNA large subunit methyltransferase E (197 aa).

Residues Gly50, Trp52, Asp67, Asp83, and Asp111 each contribute to the S-adenosyl-L-methionine site. Catalysis depends on Lys151, which acts as the Proton acceptor.

It belongs to the class I-like SAM-binding methyltransferase superfamily. RNA methyltransferase RlmE family.

Its subcellular location is the cytoplasm. It carries out the reaction uridine(2552) in 23S rRNA + S-adenosyl-L-methionine = 2'-O-methyluridine(2552) in 23S rRNA + S-adenosyl-L-homocysteine + H(+). In terms of biological role, specifically methylates the uridine in position 2552 of 23S rRNA at the 2'-O position of the ribose in the fully assembled 50S ribosomal subunit. In Thermoplasma volcanium (strain ATCC 51530 / DSM 4299 / JCM 9571 / NBRC 15438 / GSS1), this protein is Ribosomal RNA large subunit methyltransferase E.